The following is an 861-amino-acid chain: E3 ubiquitin-protein ligase HECTD3 (861 aa).

Residue alanine 2 is modified to N-acetylalanine. Serine 12 carries the phosphoserine modification. In terms of domain architecture, DOC spans 219-397 (DEDLIHFLYD…ASLVRYPRLE (179 aa)). The 346-residue stretch at 512–857 (YEKPLDYRWP…NCVAIDTDMS (346 aa)) folds into the HECT domain. Residue cysteine 823 is the Glycyl thioester intermediate of the active site.

Interacts with TRIOBP. Interacts with STX8.

It localises to the cytoplasm. Its subcellular location is the perinuclear region. It catalyses the reaction S-ubiquitinyl-[E2 ubiquitin-conjugating enzyme]-L-cysteine + [acceptor protein]-L-lysine = [E2 ubiquitin-conjugating enzyme]-L-cysteine + N(6)-ubiquitinyl-[acceptor protein]-L-lysine.. Its pathway is protein modification; protein ubiquitination. Functionally, E3 ubiquitin ligases accepts ubiquitin from an E2 ubiquitin-conjugating enzyme in the form of a thioester and then directly transfers the ubiquitin to targeted substrates. Mediates ubiquitination of TRIOBP and its subsequent proteasomal degradation, thus facilitating cell cycle progression by regulating the turn-over of TRIOBP. Also mediates ubiquitination of STX8. The sequence is that of E3 ubiquitin-protein ligase HECTD3 (Hectd3) from Mus musculus (Mouse).